Reading from the N-terminus, the 347-residue chain is Protein-glutamate methylesterase/protein-glutamine glutaminase 3 (347 aa).

The region spanning 3–120 (QVFIVDDSAV…KNFLEESEIL (118 aa)) is the Response regulatory domain. A 4-aspartylphosphate modification is found at aspartate 54. The region spanning 159–347 (IDTTDKLIAI…SKIVGEVQYF (189 aa)) is the CheB-type methylesterase domain. Active-site residues include serine 171, histidine 197, and aspartate 293.

Belongs to the CheB family. Phosphorylated by CheA. Phosphorylation of the N-terminal regulatory domain activates the methylesterase activity.

The protein localises to the cytoplasm. It catalyses the reaction [protein]-L-glutamate 5-O-methyl ester + H2O = L-glutamyl-[protein] + methanol + H(+). It carries out the reaction L-glutaminyl-[protein] + H2O = L-glutamyl-[protein] + NH4(+). Involved in chemotaxis. Part of a chemotaxis signal transduction system that modulates chemotaxis in response to various stimuli. Catalyzes the demethylation of specific methylglutamate residues introduced into the chemoreceptors (methyl-accepting chemotaxis proteins or MCP) by CheR. Also mediates the irreversible deamidation of specific glutamine residues to glutamic acid. This Leptospira interrogans serogroup Icterohaemorrhagiae serovar copenhageni (strain Fiocruz L1-130) protein is Protein-glutamate methylesterase/protein-glutamine glutaminase 3.